Here is a 398-residue protein sequence, read N- to C-terminus: tRNA-specific 2-thiouridylase MnmA (398 aa).

Residues 20-27 (AMSGGVDS) and leucine 46 each bind ATP. Catalysis depends on cysteine 114, which acts as the Nucleophile. An intrachain disulfide couples cysteine 114 to cysteine 210. Glycine 138 contributes to the ATP binding site. The tract at residues 160 to 162 (RDQ) is interaction with tRNA. Cysteine 210 acts as the Cysteine persulfide intermediate in catalysis.

This sequence belongs to the MnmA/TRMU family.

It localises to the cytoplasm. It carries out the reaction S-sulfanyl-L-cysteinyl-[protein] + uridine(34) in tRNA + AH2 + ATP = 2-thiouridine(34) in tRNA + L-cysteinyl-[protein] + A + AMP + diphosphate + H(+). Functionally, catalyzes the 2-thiolation of uridine at the wobble position (U34) of tRNA, leading to the formation of s(2)U34. In Brucella melitensis biotype 1 (strain ATCC 23456 / CCUG 17765 / NCTC 10094 / 16M), this protein is tRNA-specific 2-thiouridylase MnmA.